The following is a 229-amino-acid chain: ATP synthase subunit a (229 aa).

6 helical membrane-spanning segments follow: residues 25 to 45, 86 to 106, 111 to 131, 142 to 162, 181 to 201, and 202 to 222; these read ADAI…SLIA, IATL…PGFF, NLNT…IVGI, FMGP…IGHL, LVLM…MMLM, and GVLV…IYIQ.

Belongs to the ATPase A chain family. F-type ATPases have 2 components, CF(1) - the catalytic core - and CF(0) - the membrane proton channel. CF(1) has five subunits: alpha(3), beta(3), gamma(1), delta(1), epsilon(1). CF(0) has three main subunits: a(1), b(2) and c(9-12). The alpha and beta chains form an alternating ring which encloses part of the gamma chain. CF(1) is attached to CF(0) by a central stalk formed by the gamma and epsilon chains, while a peripheral stalk is formed by the delta and b chains.

The protein resides in the cell inner membrane. Its function is as follows. Key component of the proton channel; it plays a direct role in the translocation of protons across the membrane. The chain is ATP synthase subunit a from Geobacter sulfurreducens (strain ATCC 51573 / DSM 12127 / PCA).